Consider the following 417-residue polypeptide: Multifunctional CCA protein (417 aa).

ATP is bound by residues Gly-8 and Arg-11. Residues Gly-8 and Arg-11 each contribute to the CTP site. The Mg(2+) site is built by Asp-21 and Asp-23. Residues Arg-91, Arg-137, and Arg-140 each coordinate ATP. CTP is bound by residues Arg-91, Arg-137, and Arg-140. The region spanning 225–326 is the HD domain; that stretch reads SGIHTLMTLQ…LNVLKKTDAF (102 aa).

Belongs to the tRNA nucleotidyltransferase/poly(A) polymerase family. Bacterial CCA-adding enzyme type 1 subfamily. As to quaternary structure, monomer. Can also form homodimers and oligomers. It depends on Mg(2+) as a cofactor. Ni(2+) is required as a cofactor.

The catalysed reaction is a tRNA precursor + 2 CTP + ATP = a tRNA with a 3' CCA end + 3 diphosphate. The enzyme catalyses a tRNA with a 3' CCA end + 2 CTP + ATP = a tRNA with a 3' CCACCA end + 3 diphosphate. In terms of biological role, catalyzes the addition and repair of the essential 3'-terminal CCA sequence in tRNAs without using a nucleic acid template. Adds these three nucleotides in the order of C, C, and A to the tRNA nucleotide-73, using CTP and ATP as substrates and producing inorganic pyrophosphate. tRNA 3'-terminal CCA addition is required both for tRNA processing and repair. Also involved in tRNA surveillance by mediating tandem CCA addition to generate a CCACCA at the 3' terminus of unstable tRNAs. While stable tRNAs receive only 3'-terminal CCA, unstable tRNAs are marked with CCACCA and rapidly degraded. The protein is Multifunctional CCA protein of Neisseria meningitidis serogroup B (strain ATCC BAA-335 / MC58).